The sequence spans 340 residues: MKILLIYSMTPKLVIWFTLFVLCLQMGDTFDISINNEEIDNPGLIIKSKFKKYLPELQENLEIPITEKQQSIKESFIPRRINYPHYGLRSRFRKDIAISETTTTTTQESETSIATNGDSFDSDNGENKSDSSDDESSNNEGNDKSDATFKSLSSSSPTVVHSRRSWIKDFLIFKEQKVSTMSSSSSSSSGSLRDKSKLKQENKQLQSRIKNYDDTVSDPRDLKRWVRLIADEGKNEFGKKHSSKNYIQKNEIELDIEEFIHYLVEEQGFNSSDLEFLRLKNLDYGLGEIEKELNKLKEAKGSPKVISIGGEDENSAPLLWIKISKPTVCLVIALTFLLLG.

The signal sequence occupies residues 1-29 (MKILLIYSMTPKLVIWFTLFVLCLQMGDT). A compositionally biased stretch (low complexity) spans 99–115 (SETTTTTTQESETSIAT). Disordered regions lie at residues 99 to 154 (SETT…SLSS) and 181 to 212 (MSSS…IKNY). N-linked (GlcNAc...) asparagine glycosylation occurs at Asn-127. Low complexity predominate over residues 182-191 (SSSSSSSSGS). The segment covering 192 to 202 (LRDKSKLKQEN) has biased composition (basic and acidic residues). A glycan (N-linked (GlcNAc...) asparagine) is linked at Asn-270. Asn-314 carries the GPI-anchor amidated asparagine lipid modification. Positions 315–340 (SAPLLWIKISKPTVCLVIALTFLLLG) are cleaved as a propeptide — removed in mature form.

Its subcellular location is the cell membrane. The protein localises to the secreted. The sequence is that of Predicted GPI-anchored protein 46 (PGA46) from Candida albicans (strain SC5314 / ATCC MYA-2876) (Yeast).